A 754-amino-acid polypeptide reads, in one-letter code: 5-methyltetrahydropteroyltriglutamate--homocysteine methyltransferase (754 aa).

5-methyltetrahydropteroyltri-L-glutamate contacts are provided by residues 17–20 (RELK) and lysine 117. L-homocysteine-binding positions include 431 to 433 (IGS) and glutamate 484. L-methionine contacts are provided by residues 431–433 (IGS) and glutamate 484. 5-methyltetrahydropteroyltri-L-glutamate-binding positions include 515–516 (RC) and tryptophan 561. Residue aspartate 599 coordinates L-homocysteine. Position 599 (aspartate 599) interacts with L-methionine. Glutamate 605 lines the 5-methyltetrahydropteroyltri-L-glutamate pocket. Positions 641, 643, and 665 each coordinate Zn(2+). Histidine 694 (proton donor) is an active-site residue. Cysteine 726 lines the Zn(2+) pocket.

The protein belongs to the vitamin-B12 independent methionine synthase family. Zn(2+) serves as cofactor.

The enzyme catalyses 5-methyltetrahydropteroyltri-L-glutamate + L-homocysteine = tetrahydropteroyltri-L-glutamate + L-methionine. The protein operates within amino-acid biosynthesis; L-methionine biosynthesis via de novo pathway; L-methionine from L-homocysteine (MetE route): step 1/1. In terms of biological role, catalyzes the transfer of a methyl group from 5-methyltetrahydrofolate to homocysteine resulting in methionine formation. This chain is 5-methyltetrahydropteroyltriglutamate--homocysteine methyltransferase, found in Salmonella paratyphi A (strain ATCC 9150 / SARB42).